Here is a 334-residue protein sequence, read N- to C-terminus: Glycerol-3-phosphate dehydrogenase [NAD(P)+] (334 aa).

S14, Y15, H35, and K109 together coordinate NADPH. K109, G138, and T140 together coordinate sn-glycerol 3-phosphate. Residue A142 coordinates NADPH. Sn-glycerol 3-phosphate-binding residues include K194, D247, S257, R258, and N259. K194 functions as the Proton acceptor in the catalytic mechanism. R258 is a binding site for NADPH. 2 residues coordinate NADPH: V282 and E284.

This sequence belongs to the NAD-dependent glycerol-3-phosphate dehydrogenase family.

The protein localises to the cytoplasm. It catalyses the reaction sn-glycerol 3-phosphate + NAD(+) = dihydroxyacetone phosphate + NADH + H(+). The catalysed reaction is sn-glycerol 3-phosphate + NADP(+) = dihydroxyacetone phosphate + NADPH + H(+). It participates in membrane lipid metabolism; glycerophospholipid metabolism. Catalyzes the reduction of the glycolytic intermediate dihydroxyacetone phosphate (DHAP) to sn-glycerol 3-phosphate (G3P), the key precursor for phospholipid synthesis. This Aeromonas salmonicida (strain A449) protein is Glycerol-3-phosphate dehydrogenase [NAD(P)+].